The primary structure comprises 58 residues: MNFSKIFIFVVLAVLLLCSQTEAGRLKKLGKKIEGAGKRVFKAAEKALPVVAGVKALG.

A signal peptide spans 1–23; sequence MNFSKIFIFVVLAVLLLCSQTEA. Leucine 57 is modified (leucine amide).

The protein belongs to the cecropin family. In terms of tissue distribution, relatively abundant in head, thorax and to a lesser extent in abdominal carcass and anterior midgut.

The protein resides in the secreted. In terms of biological role, antibacterial activity against several Gram-positive and Gram-negative bacteria. Antifungal activity against A.fumigatus, B.cinerea, F.culmorum, F.oxysporum, N.crassa, C.albicans, C.neoformans and S.cerevisiae. This Anopheles gambiae (African malaria mosquito) protein is Cecropin-A (CecA).